The following is a 380-amino-acid chain: Alcohol dehydrogenase 1 (380 aa).

C48, T50, H70, C100, C103, C106, C114, and C178 together coordinate Zn(2+). T50 and H70 together coordinate an alcohol. Residue T50 participates in NAD(+) binding. NAD(+) is bound by residues 203-208 (GLGAVG), D227, R232, T273, V296, 296-298 (VGV), F323, and R373.

The protein belongs to the zinc-containing alcohol dehydrogenase family. As to quaternary structure, homodimer. Homotetramer. It depends on Zn(2+) as a cofactor.

The protein localises to the cytoplasm. It carries out the reaction a primary alcohol + NAD(+) = an aldehyde + NADH + H(+). The enzyme catalyses a secondary alcohol + NAD(+) = a ketone + NADH + H(+). The sequence is that of Alcohol dehydrogenase 1 (ADH1) from Solanum tuberosum (Potato).